A 316-amino-acid chain; its full sequence is Phosphate acetyltransferase (316 aa).

It belongs to the phosphate acetyltransferase and butyryltransferase family.

It is found in the cytoplasm. The enzyme catalyses acetyl-CoA + phosphate = acetyl phosphate + CoA. It participates in metabolic intermediate biosynthesis; acetyl-CoA biosynthesis; acetyl-CoA from acetate: step 2/2. This is Phosphate acetyltransferase (pta) from Rhizobium meliloti (Ensifer meliloti).